Reading from the N-terminus, the 760-residue chain is MDSNLIFDQKVINGFAPVLTYAACEWFLILLMFIDALLSYLLVWFARYCRLQMPCFLCSKLLHPLHWRFLLCRNHRSEVSSYMSCQNHGNNLADCRGMCDDCLLSFTKMTGPNPDMNRLLLGKLGYDLLSRSHFAHPRSCSCCNKPWRTRHHTQRLIRLGSRGRNSSSKPNIPAPRHLTRRGSGGSLKKMRDHIATSGSEYVDVGSRDGMAHVGYTELKIHSDSESEFLFSDDDAFLHITDFNVEPSEKRTHKSRRRKSFDDKKMSNHKQPVLQDNQYKKIHVEDNETVESSMLGYNLENRTRQKQPVKAKEHDDVLSELITMSEARPFLLGSPRKYAAGVVTQNENEAEVSGSSSPSGGEFLSPSAENGASREIRIQEHDDSSDFSQNITSSAMEIEEFEAAIEQKESDHMDVSGSVANEPSSDEENEVEGDSKPLISNNMSDSLEQEQSGEEESEVNENNVAEEYFSNEEEDEVNGHTEPLTSKSESGSFAEEQSSEDEDGSNIYSVAKDHSSNEEDVDNEESEPMTSNNVTGVVKEEHSAKEEHGDHEETEPLTSLNISKEEPSLEHSDKDSLKITETRNTSNGSPELKHSASVESFVSISSDIEGESLVEVLKQQLEHGRKSLRDLNKEFEEERNASAIATNQAMAMITRLQEEKAALHMEALQYLRMMDEQAEHDMDALERANDVLADREKEIQDLEMELEYYRVKYPDEPREEILASMGILGNTEETNVTSPTDETSIKDSTDTKLTGSPSAEN.

The helical transmembrane segment at 26–46 (WFLILLMFIDALLSYLLVWFA) threads the bilayer. 4 disordered regions span residues 161–189 (SRGRNSSSKPNIPAPRHLTRRGSGGSLKK), 247–273 (SEKRTHKSRRRKSFDDKKMSNHKQPVL), 292–311 (SMLGYNLENRTRQKQPVKAK), and 348–595 (EAEV…KHSA). The span at 352–366 (SGSSSPSGGEFLSPS) shows a compositional bias: low complexity. Positions 371–383 (ASREIRIQEHDDS) are enriched in basic and acidic residues. Residues 385-394 (DFSQNITSSA) show a composition bias toward polar residues. Residues 388-416 (QNITSSAMEIEEFEAAIEQKESDHMDVSG) adopt a coiled-coil conformation. Residues 404 to 413 (IEQKESDHMD) are compositionally biased toward basic and acidic residues. 2 stretches are compositionally biased toward acidic residues: residues 446–458 (LEQEQSGEEESEV) and 517–526 (EEDVDNEESE). Composition is skewed to basic and acidic residues over residues 537–550 (VKEEHSAKEEHGDH) and 562–580 (SKEEPSLEHSDKDSLKITE). Residues 611-709 (SLVEVLKQQL…DLEMELEYYR (99 aa)) form the GTD-binding domain. Positions 725–760 (GILGNTEETNVTSPTDETSIKDSTDTKLTGSPSAEN) are disordered. Polar residues-rich tracts occupy residues 730-741 (TEETNVTSPTDE) and 750-760 (TKLTGSPSAEN).

The protein localises to the endomembrane system. Membrane-anchored myosin receptors that define a distinct, plant-specific transport vesicle compartment. In Arabidopsis thaliana (Mouse-ear cress), this protein is Probable myosin-binding protein 4.